Here is a 303-residue protein sequence, read N- to C-terminus: Glycine--tRNA ligase alpha subunit (303 aa).

Belongs to the class-II aminoacyl-tRNA synthetase family. In terms of assembly, tetramer of two alpha and two beta subunits.

The protein resides in the cytoplasm. It carries out the reaction tRNA(Gly) + glycine + ATP = glycyl-tRNA(Gly) + AMP + diphosphate. This Helicobacter pylori (strain ATCC 700392 / 26695) (Campylobacter pylori) protein is Glycine--tRNA ligase alpha subunit (glyQ).